Here is a 245-residue protein sequence, read N- to C-terminus: Carbohydrate deacetylase 1 (245 aa).

Mg(2+)-binding residues include His59 and His125.

Belongs to the YdjC deacetylase family. As to quaternary structure, homodimer. Mg(2+) is required as a cofactor.

Probably catalyzes the deacetylation of acetylated carbohydrates an important step in the degradation of oligosaccharides. In Listeria innocua serovar 6a (strain ATCC BAA-680 / CLIP 11262), this protein is Carbohydrate deacetylase 1.